Reading from the N-terminus, the 266-residue chain is Receptor-like protein 5 (266 aa).

The signal sequence occupies residues 1–19; the sequence is MINYRHIVFCLCVMVVVDS. The Extracellular segment spans residues 20–169; that stretch reads RLTPYLAAIE…PTRNKNKPTV (150 aa). LRR repeat units lie at residues 93-117 and 119-143; these read LTSLRVIDLSHNRLKCTIPFEITKL and NLTIVDVSYNQLHGEVPRVRGIVIL. An N-linked (GlcNAc...) asparagine glycan is attached at asparagine 119. Residues 170–190 form a helical membrane-spanning segment; the sequence is LVLLLGILVGLVVAGGASFGF. Topologically, residues 191–266 are cytoplasmic; that stretch reads YLYRIRKQPK…TNQNPHLPYM (76 aa).

It belongs to the RLP family.

It is found in the cell membrane. This is Receptor-like protein 5 from Arabidopsis thaliana (Mouse-ear cress).